Consider the following 396-residue polypeptide: Ribosomal RNA large subunit methyltransferase I (396 aa).

A PUA domain is found at 2-81; it reads SVRLVLAKGR…ESIDIAFFTR (80 aa).

Belongs to the methyltransferase superfamily. RlmI family.

The protein resides in the cytoplasm. It catalyses the reaction cytidine(1962) in 23S rRNA + S-adenosyl-L-methionine = 5-methylcytidine(1962) in 23S rRNA + S-adenosyl-L-homocysteine + H(+). Functionally, specifically methylates the cytosine at position 1962 (m5C1962) of 23S rRNA. This is Ribosomal RNA large subunit methyltransferase I from Escherichia coli O127:H6 (strain E2348/69 / EPEC).